The sequence spans 334 residues: Eukaryotic translation initiation factor 3 subunit H (334 aa).

Positions 20-152 (VQCDGLAAMK…LKAYRLTPQA (133 aa)) constitute an MPN domain.

The protein belongs to the eIF-3 subunit H family. In terms of assembly, component of the eukaryotic translation initiation factor 3 (eIF-3) complex.

The protein resides in the cytoplasm. Its function is as follows. Component of the eukaryotic translation initiation factor 3 (eIF-3) complex, which is involved in protein synthesis of a specialized repertoire of mRNAs and, together with other initiation factors, stimulates binding of mRNA and methionyl-tRNAi to the 40S ribosome. The eIF-3 complex specifically targets and initiates translation of a subset of mRNAs involved in cell proliferation. The polypeptide is Eukaryotic translation initiation factor 3 subunit H (Anopheles gambiae (African malaria mosquito)).